The primary structure comprises 1161 residues: MTHGEELGSDVHQDSIVLTYLEGLLMHQAAGGSGTAINKKSAGHKEEDQNFNLSGSAFPSCQSNGPTVSTQTYQGSGMLHLKKARLLQSSEDWNAAKRKRLSDSIVNLNVKKEALLAGMVDSVPKGKQDSTLLASLLQSFSSRLQTVALSQQIRQSLKEQGYALSHESLKVEKDLRCYGVASSHLKTLLKKSKTKDQKSGPTLPDVTPNLIRDSFVESSHPAVGQSGTKVMSEPLSCAARLQAVASMVEKRASPAASPKPSVACSQLALLLSSEAHLQQYSREHALKTQNAHQVASERLAAMARLQENGQKDVGSSQLSKGVSGHLNGQARALPASKLVANKNNAATFQSPMGVVPSSPKNTSYKNSLERNNLKQAANNSLLLHLLKSQTIPTPMNGHSQNERASSFESSTPTTIDEYSDNNPSFTDDSSGDESSYSNCVPIDLSCKHRIEKPEAERPVSLENLTQSLLNTWDPKIPGVDIKEDQDTSTNSKLNSHQKVTLLQLLLGHKSEETVERNASPQDIHSDGTKFSPQNYTRTSVIESPSTNRTTPVSTPPLYTASQAESPINLSQHSLVIKWNSPPYACSTPASKLTNTAPSHLMDLTKGKESQAEKPAPSEGAQNSATFSASKLLQNLAQCGLQSSGPGEEQRPCKQLLSGNPDKPLGLIDRLNSPLLSNKTNAAEESKAFSSQPAGPEPGLPGCEIENLLERRTVLQLLLGNSSKGKNEKKEKTPARDEAPQEHSERAANEQILMVKIKSEPCDDFQTHNTNLPLNHDAKSAPFLGVTPAIHRSTAALPVSEDFKSEPASPQDFSFSKNGLLSRLLRQNQESYPADEQDKSHRNSELPTLESKNICMVPKKRKLYTEPLENPFKKMKNTAVDTANHHSGPEVLYGSLLHQEELKFSRNELDYKYPAGHSSASDGDHRSWARESKSFNVLKQLLLSENCVRDLSPHRSDSVPDTKKKGHKNNAPGSKPEFGISSLNGLMYSSPQPGSCVTDHRTFSYPGMVKTPLSPPFPEHLGCVGSRPEPGLLNGCSVPGEKGPIKWVIADMDKNEYEKDSPRLTKTNPILYYMLQKGGGNSVTTQETQDKDIWREPASAESLSQVTVKEELLPAAETKASFFNLRSPYNSHMGNNASRPHSTNGEVYGLLGNALTIKKESE.

An interaction with ZNF366 region spans residues 1–416 (MTHGEELGSD…FESSTPTTID (416 aa)). The LXXLL motif 1 motif lies at 21 to 25 (LEGLL). Residues 34–68 (GTAINKKSAGHKEEDQNFNLSGSAFPSCQSNGPTV) are disordered. Residues 50–68 (NFNLSGSAFPSCQSNGPTV) show a composition bias toward polar residues. Residues 78–335 (MLHLKKARLL…LNGQARALPA (258 aa)) form a repression domain 1 region. Phosphoserine is present on serine 104. Residue lysine 111 is modified to N6-acetyllysine; alternate. Lysine 111 participates in a covalent cross-link: Glycyl lysine isopeptide (Lys-Gly) (interchain with G-Cter in SUMO2); alternate. An LXXLL motif 2 motif is present at residues 133-137 (LASLL). Residue lysine 158 is modified to N6-acetyllysine. A Glycyl lysine isopeptide (Lys-Gly) (interchain with G-Cter in SUMO2) cross-link involves residue lysine 170. The short motif at 185–189 (LKTLL) is the LXXLL motif 3 element. Residues lysine 195 and lysine 198 each participate in a glycyl lysine isopeptide (Lys-Gly) (interchain with G-Cter in SUMO2) cross-link. Threonine 207 is subject to Phosphothreonine. Position 218 is a phosphoserine (serine 218). Positions 267–271 (LALLL) match the LXXLL motif 4 motif. Lysine 287 and lysine 311 each carry N6-acetyllysine. Phosphoserine is present on serine 358. Lysine 374 participates in a covalent cross-link: Glycyl lysine isopeptide (Lys-Gly) (interchain with G-Cter in SUMO2). A Phosphoserine modification is found at serine 380. The short motif at 382–386 (LLHLL) is the LXXLL motif 5 element. A disordered region spans residues 393-436 (TPMNGHSQNERASSFESSTPTTIDEYSDNNPSFTDDSSGDESSY). The segment at 411–701 (TPTTIDEYSD…PAGPEPGLPG (291 aa)) is repression domain 2. The tract at residues 432-473 (DESSYSNCVPIDLSCKHRIEKPEAERPVSLENLTQSLLNTWD) is required for targeting to small nuclear foci. Residues 441 to 447 (PIDLSCK) carry the CTBP-binding; principal site motif. N6-acetyllysine occurs at positions 447 and 482. Residue serine 488 is modified to Phosphoserine. An LXXLL motif 6 motif is present at residues 501–505 (LLQLL). A Glycyl lysine isopeptide (Lys-Gly) (interchain with G-Cter in SUMO2) cross-link involves residue lysine 509. Positions 517–552 (NASPQDIHSDGTKFSPQNYTRTSVIESPSTNRTTPV) are enriched in polar residues. The disordered stretch occupies residues 517–559 (NASPQDIHSDGTKFSPQNYTRTSVIESPSTNRTTPVSTPPLYT). Residue serine 519 is modified to Phosphoserine. The residue at position 529 (lysine 529) is an N6-acetyllysine. A phosphoserine mark is found at serine 531, serine 543, and serine 565. The CTBP-binding motif lies at 566-570 (PINLS). Disordered stretches follow at residues 604-623 (TKGKESQAEKPAPSEGAQNS), 639-702 (GLQS…LPGC), and 717-747 (LLGNSSKGKNEKKEKTPARDEAPQEHSERAA). Position 607 is an N6-acetyllysine (lysine 607). Serine 672 carries the phosphoserine modification. Residues 714 to 718 (LQLLL) carry the LXXLL motif 7 motif. The segment covering 724-747 (GKNEKKEKTPARDEAPQEHSERAA) has biased composition (basic and acidic residues). Residues 736-886 (DEAPQEHSER…TAVDTANHHS (151 aa)) form a repression domain 3 region. Positions 754–1161 (VKIKSEPCDD…NALTIKKESE (408 aa)) are interaction with ZNF366. Residues lysine 757 and lysine 803 each participate in a glycyl lysine isopeptide (Lys-Gly) (interchain with G-Cter in SUMO2) cross-link. Serine 808 carries the phosphoserine modification. The LXXLL motif 8 motif lies at 820 to 824 (LSRLL). The tract at residues 829–848 (ESYPADEQDKSHRNSELPTL) is disordered. Glycyl lysine isopeptide (Lys-Gly) (interchain with G-Cter in SUMO2) cross-links involve residues lysine 851 and lysine 902. Lysine 932 carries the N6-acetyllysine; alternate modification. A Glycyl lysine isopeptide (Lys-Gly) (interchain with G-Cter in SUMO2); alternate cross-link involves residue lysine 932. Residues 937 to 941 (LKQLL) carry the LXXLL motif 9 motif. The CTBP-binding signature appears at 947–951 (VRDLS). Over residues 950–962 (LSPHRSDSVPDTK) the composition is skewed to basic and acidic residues. Residues 950–976 (LSPHRSDSVPDTKKKGHKNNAPGSKPE) are disordered. Serine 1003 is subject to Phosphoserine. The segment at 1063–1076 (LTKTNPILYYMLQK) is ligand-dependent nuclear receptor binding. Glycyl lysine isopeptide (Lys-Gly) (interchain with G-Cter in SUMO2) cross-links involve residues lysine 1108, lysine 1118, and lysine 1157. The interval 1121 to 1161 (FFNLRSPYNSHMGNNASRPHSTNGEVYGLLGNALTIKKESE) is repression domain 4.

In terms of assembly, interacts with CTBP1, CTBP2, ERS1, HDAC1, HDAC2, HDAC5, HDAC6, NR2C2, NR3C1, NR3C2, YWHAH, JUN and FOS. Found in a complex with both NR3C1 and YWHAH. Interacts with NR2C1 (sumoylated form and via the ligand-binding domain); the interaction results in promoting the repressor activity of NR2C1. Interacts with RARA and RXRB homodimers and RARA/RXRB heterodimers in the presence of ligand. Interacts with HDAC1 and HDAC3 via its N-terminal domain. Interacts with ZNF366. Interacts with RORA. In terms of processing, acetylation abolishes interaction with CTBP1. Phosphorylation enhances interaction with YWHAH. Acetylation regulates its nuclear translocation and corepressive activity. In terms of tissue distribution, expressed in the embryonic placenta. In the adult, expression is strong in the testis and brain. Also expressed at a high level in the white adipose tissue. Expressed constantly but at a weaker level in the adult heart, lung, stomach and kidney. Expressed moderately in the skeletal muscle. Expressed at a low level in the adult spleen, liver and brown adipose tissue. Expressed in the ovary at a high level in granulosa cells and at a lower level in the thecal and interstitial compartments.

Its subcellular location is the nucleus. In terms of biological role, modulates transcriptional repression by nuclear hormone receptors such as NR2C1, thyroid hormone receptor and retinoic acid receptor/RARA. Essential for cumulus expansion and follicle rupture during ovulation. Also controls the balance between fat accumulation and energy expenditure. Positive regulator of the circadian clock gene expression: stimulates transcription of BMAL1, CLOCK and CRY1 by acting as a coactivator for RORA and RORC. Involved in the regulation of ovarian function. Plays a role in renal development. The sequence is that of Nuclear receptor-interacting protein 1 from Mus musculus (Mouse).